A 233-amino-acid polypeptide reads, in one-letter code: Orotidine 5'-phosphate decarboxylase (233 aa).

Residues Asp-11, Lys-34, Asp-61–Thr-70, Thr-117, Arg-179, Gln-188, Gly-208, and Arg-209 contribute to the substrate site. The active-site Proton donor is Lys-63.

Belongs to the OMP decarboxylase family. Type 1 subfamily. Homodimer.

The catalysed reaction is orotidine 5'-phosphate + H(+) = UMP + CO2. It participates in pyrimidine metabolism; UMP biosynthesis via de novo pathway; UMP from orotate: step 2/2. Catalyzes the decarboxylation of orotidine 5'-monophosphate (OMP) to uridine 5'-monophosphate (UMP). The sequence is that of Orotidine 5'-phosphate decarboxylase from Streptococcus pneumoniae (strain CGSP14).